The sequence spans 185 residues: Ribosome-recycling factor (185 aa).

The protein belongs to the RRF family.

The protein resides in the cytoplasm. In terms of biological role, responsible for the release of ribosomes from messenger RNA at the termination of protein biosynthesis. May increase the efficiency of translation by recycling ribosomes from one round of translation to another. The protein is Ribosome-recycling factor of Trichlorobacter lovleyi (strain ATCC BAA-1151 / DSM 17278 / SZ) (Geobacter lovleyi).